An 806-amino-acid chain; its full sequence is MAIFNFLKLISPKNRILSKANRIASEVESYKNYYRNLTDQQLFEESNKLVDLVTKQNYTILDVCVAALALIREVVYRETGEFAYRVQIIGAFIVLSGDFAEMMTGEGKTLTIVLAAYVSALEKRGVHVVTVNEYLAQRDANNAMKILKRVGMSVGCNFANLSPQLKQAAFNCDVTYTTNSELGFDYLRDNMVHSYQDKKIRELHFAIVDEGDSVLIDEARTPLIISGPSKNEFGLYVAVDRFVKSLTEQEFKIDPESRAASLTELGIKKAEQTFKKENLFALENSDLFHKIMNGLTAVKVFEQGKEYIVRDGKVLIVDHFTGRILEGRSYSNGLQQAVQAKEYVEIEPENVIVATITYQSFFRLYNRLAAVSGTALTESEEFLKIYNMVVVPVPTNRPNIRKDRSDSVFGTPQIKWMAVVKEIKKIHETSRPILIGTANIDDSELLHNLLLEANIPHEVLNAKNHSREAEIVTKAGQKNAVTISTNMAGRGTDIRLGEGVAEMGGLYVLGTERNESRRIDNQLRGRAARQGDKGETKFFISLGDSLFKRFAHDKIERAISKLGNETFDSAFFSKMLSRTQKRVEAINFDTRKNLIDYDHVLASQRELIYKQRDKFLLANDLSEMIDKMLEKFVQQFCDQYRNQKNQNLINHIALAEALNLEMNMQNTINPKVFENMTFDVAVDKTRNLVAKKISDKVNVLTKPIALNRFRDIIITSMDKHWTEHLDSVFKLREGVVLRSMEHTSPLNVYIKETDILFKTMLQKIAQDVIVQIANLTTPDEFDHSLMQANALKKLAAIKADEKSNQE.

Residues Q87, 105 to 109 (GEGKT), and D493 contribute to the ATP site.

The protein belongs to the SecA family. In terms of assembly, monomer and homodimer. Part of the essential Sec protein translocation apparatus which comprises SecA, SecYEG and auxiliary proteins SecDF. Other proteins may also be involved.

The protein localises to the cell membrane. The protein resides in the cytoplasm. It carries out the reaction ATP + H2O + cellular proteinSide 1 = ADP + phosphate + cellular proteinSide 2.. In terms of biological role, part of the Sec protein translocase complex. Interacts with the SecYEG preprotein conducting channel. Has a central role in coupling the hydrolysis of ATP to the transfer of proteins into and across the cell membrane, serving as an ATP-driven molecular motor driving the stepwise translocation of polypeptide chains across the membrane. This is Protein translocase subunit SecA from Mycoplasma genitalium (strain ATCC 33530 / DSM 19775 / NCTC 10195 / G37) (Mycoplasmoides genitalium).